We begin with the raw amino-acid sequence, 380 residues long: Cytochrome b (380 aa).

The next 4 membrane-spanning stretches (helical) occupy residues 34–54, 78–99, 114–134, and 179–199; these read FGSLLGICLATQILTGLLLAM, WLIRNLHANGASFFFICVYLHI, WNTGILLLLTLMATAFVGYVL, and FFALHFLLPFAIAGLTLIHLT. Residues H84 and H98 each coordinate heme b. Positions 183 and 197 each coordinate heme b. H202 contacts a ubiquinone. Helical transmembrane passes span 227–247, 289–309, 321–341, and 348–368; these read LKDALGFMLMFLPLTTLALFS, LGGVLALAASVLILFLSPLLH, LSQLLFWTLVANLFILTWVGS, and FIIIGQLASLTYFTILLILFP.

This sequence belongs to the cytochrome b family. As to quaternary structure, the cytochrome bc1 complex contains 11 subunits: 3 respiratory subunits (MT-CYB, CYC1 and UQCRFS1), 2 core proteins (UQCRC1 and UQCRC2) and 6 low-molecular weight proteins (UQCRH/QCR6, UQCRB/QCR7, UQCRQ/QCR8, UQCR10/QCR9, UQCR11/QCR10 and a cleavage product of UQCRFS1). This cytochrome bc1 complex then forms a dimer. Requires heme b as cofactor.

It is found in the mitochondrion inner membrane. Component of the ubiquinol-cytochrome c reductase complex (complex III or cytochrome b-c1 complex) that is part of the mitochondrial respiratory chain. The b-c1 complex mediates electron transfer from ubiquinol to cytochrome c. Contributes to the generation of a proton gradient across the mitochondrial membrane that is then used for ATP synthesis. The chain is Cytochrome b (MT-CYB) from Oceanites oceanicus (Wilson's storm petrel).